The following is a 61-amino-acid chain: Small ribosomal subunit protein uS14 (61 aa).

The Zn(2+) site is built by C24, C27, C40, and C43.

It belongs to the universal ribosomal protein uS14 family. Zinc-binding uS14 subfamily. In terms of assembly, part of the 30S ribosomal subunit. Contacts proteins S3 and S10. The cofactor is Zn(2+).

In terms of biological role, binds 16S rRNA, required for the assembly of 30S particles and may also be responsible for determining the conformation of the 16S rRNA at the A site. The polypeptide is Small ribosomal subunit protein uS14 (Geobacillus thermodenitrificans (strain NG80-2)).